A 185-amino-acid chain; its full sequence is Peptidyl-tRNA hydrolase (185 aa).

Residue Y14 participates in tRNA binding. H19 (proton acceptor) is an active-site residue. TRNA is bound by residues Y64, N66, and N112.

The protein belongs to the PTH family. Monomer.

The protein resides in the cytoplasm. It catalyses the reaction an N-acyl-L-alpha-aminoacyl-tRNA + H2O = an N-acyl-L-amino acid + a tRNA + H(+). Hydrolyzes ribosome-free peptidyl-tRNAs (with 1 or more amino acids incorporated), which drop off the ribosome during protein synthesis, or as a result of ribosome stalling. Functionally, catalyzes the release of premature peptidyl moieties from peptidyl-tRNA molecules trapped in stalled 50S ribosomal subunits, and thus maintains levels of free tRNAs and 50S ribosomes. The sequence is that of Peptidyl-tRNA hydrolase from Lactobacillus delbrueckii subsp. bulgaricus (strain ATCC 11842 / DSM 20081 / BCRC 10696 / JCM 1002 / NBRC 13953 / NCIMB 11778 / NCTC 12712 / WDCM 00102 / Lb 14).